A 210-amino-acid polypeptide reads, in one-letter code: Nucleoside triphosphate pyrophosphatase (210 aa).

The active-site Proton acceptor is D79.

The protein belongs to the Maf family. A divalent metal cation serves as cofactor.

It localises to the cytoplasm. The catalysed reaction is a ribonucleoside 5'-triphosphate + H2O = a ribonucleoside 5'-phosphate + diphosphate + H(+). It catalyses the reaction a 2'-deoxyribonucleoside 5'-triphosphate + H2O = a 2'-deoxyribonucleoside 5'-phosphate + diphosphate + H(+). In terms of biological role, nucleoside triphosphate pyrophosphatase. May have a dual role in cell division arrest and in preventing the incorporation of modified nucleotides into cellular nucleic acids. This chain is Nucleoside triphosphate pyrophosphatase, found in Mycolicibacterium paratuberculosis (strain ATCC BAA-968 / K-10) (Mycobacterium paratuberculosis).